We begin with the raw amino-acid sequence, 81 residues long: Short neurotoxin 2 (81 aa).

Positions 1–21 (MKTLLLTLVVVTIVCLDLGYT) are cleaved as a signal peptide. Cystine bridges form between Cys-24–Cys-43, Cys-38–Cys-60, Cys-62–Cys-73, and Cys-74–Cys-79.

Belongs to the three-finger toxin family. Short-chain subfamily. Type I alpha-neurotoxin sub-subfamily. As to expression, expressed by the venom gland.

It localises to the secreted. In terms of biological role, binds to muscle nicotinic acetylcholine receptor (nAChR) and inhibit acetylcholine from binding to the receptor, thereby impairing neuromuscular transmission. This chain is Short neurotoxin 2, found in Cryptophis nigrescens (Eastern small-eyed snake).